The following is a 607-amino-acid chain: MAKIVGIDLGTTNSLIAYLEGGRPVIIPNAEGSRLTPSIVAFTKDGQLLVGEPAKRQAIVNAERTIRSIKRHMGTNYKVKIDDKEYTPQEISAMILRKLKRDAEAYLGEKIEKAVITVPAYFSDAQRQATKDAGAIAGLEVVRIINEPTAAALAYGLDKEGHQKILVFDLGGGTFDVSILEIGEGVFEVIATAGNNRLGGDDFDERIVNWLIENFMEEHGINLREDKTALQRLYEAAEKAKIELSSKLQTEINLPFIAMKGNTPLHLSYTLTRAKFEELTYDLVEKTKEPTERALKDAGLSPSQIDKIILVGGATRMPCIQEWIKKHFGKEPQRNVNPDEAVALGAAIQAGVIGGEIRDIVLVDVTPLSLGIETLGGVFTKIIERNTPIPVSKSQIFTTAADYQTSVEIHVLQGERALAKDNISLGRFILDGIPPAPRGVPQIEVTFDIDVNGIVHVSAKDKATGREQRITISNAIRLSEAEIKRMTEEAKRFEEEDRKRREEIETKNQAEHLIYTARKTLKDYGDKVSKDIVQKVEDKIKNLEELIKPERINVEQVRKGMEELTQTLGEIGQFMYQSAGSTAGNPGQGQSTENPGGKTIDGDYKVN.

At Thr174 the chain carries Phosphothreonine; by autocatalysis. Polar residues predominate over residues 577–594; sequence QSAGSTAGNPGQGQSTEN. Residues 577–607 form a disordered region; sequence QSAGSTAGNPGQGQSTENPGGKTIDGDYKVN.

The protein belongs to the heat shock protein 70 family.

Functionally, acts as a chaperone. The protein is Chaperone protein DnaK of Dictyoglomus turgidum (strain DSM 6724 / Z-1310).